Consider the following 210-residue polypeptide: FMN-dependent NADH:quinone oxidoreductase (210 aa).

FMN contacts are provided by residues serine 9 and 15–17 (SHS).

Belongs to the azoreductase type 1 family. Homodimer. The cofactor is FMN.

The enzyme catalyses 2 a quinone + NADH + H(+) = 2 a 1,4-benzosemiquinone + NAD(+). It catalyses the reaction N,N-dimethyl-1,4-phenylenediamine + anthranilate + 2 NAD(+) = 2-(4-dimethylaminophenyl)diazenylbenzoate + 2 NADH + 2 H(+). Its function is as follows. Quinone reductase that provides resistance to thiol-specific stress caused by electrophilic quinones. Also exhibits azoreductase activity. Catalyzes the reductive cleavage of the azo bond in aromatic azo compounds to the corresponding amines. The protein is FMN-dependent NADH:quinone oxidoreductase of Mesorhizobium japonicum (strain LMG 29417 / CECT 9101 / MAFF 303099) (Mesorhizobium loti (strain MAFF 303099)).